Reading from the N-terminus, the 455-residue chain is Fumarate hydratase class II (455 aa).

Substrate contacts are provided by residues 96-98 (SGT), 122-125 (HPND), 132-134 (SSN), and Thr180. His181 acts as the Proton donor/acceptor in catalysis. Residue Ser311 is part of the active site. Substrate-binding positions include Ser312 and 317 to 319 (KVN).

This sequence belongs to the class-II fumarase/aspartase family. Fumarase subfamily. In terms of assembly, homotetramer.

The protein resides in the cytoplasm. It catalyses the reaction (S)-malate = fumarate + H2O. The protein operates within carbohydrate metabolism; tricarboxylic acid cycle; (S)-malate from fumarate: step 1/1. In terms of biological role, involved in the TCA cycle. Catalyzes the stereospecific interconversion of fumarate to L-malate. In Listeria monocytogenes serovar 1/2a (strain ATCC BAA-679 / EGD-e), this protein is Fumarate hydratase class II.